Reading from the N-terminus, the 357-residue chain is Probable nitronate monooxygenase (357 aa).

FMN is bound by residues Asn71, Gln175, Gly180, Gly219, and 238 to 241; that span reads QMGT.

It belongs to the nitronate monooxygenase family. NMO class I subfamily. FMN serves as cofactor.

It catalyses the reaction 3 propionate 3-nitronate + 3 O2 + H2O = 3 3-oxopropanoate + 2 nitrate + nitrite + H2O2 + 3 H(+). Its function is as follows. Nitronate monooxygenase that uses molecular oxygen to catalyze the oxidative denitrification of alkyl nitronates. Acts on propionate 3-nitronate (P3N), the presumed physiological substrate. Probably functions in the detoxification of P3N, a metabolic poison produced by plants and fungi as a defense mechanism. This chain is Probable nitronate monooxygenase, found in Staphylococcus haemolyticus (strain JCSC1435).